Reading from the N-terminus, the 1699-residue chain is Eukaryotic translation initiation factor 2-alpha kinase gcn-2 (1699 aa).

One can recognise an RWD domain in the interval 22–138 (EEKLALDAVY…HRVREFLTDH (117 aa)). Protein kinase domains are found at residues 108-507 (LTIL…DVVL) and 508-999 (VRNK…DEDL). Residues 114–122 (MADTWEGCV), Lys-154, 497–505 (LGRGGFGDV), and Lys-520 contribute to the ATP site. 2 disordered regions span residues 572 to 615 (DSSL…SLMP) and 632 to 725 (KEWS…SVFE). A compositionally biased stretch (acidic residues) spans 669–706 (SSDDEDDDDSSEIDWDAESEEVEDEESDDSDEEDEDDG). Polar residues predominate over residues 711–720 (QLNTETSTGA). Catalysis depends on Asp-829, which acts as the Proton acceptor.

Belongs to the protein kinase superfamily. Ser/Thr protein kinase family. GCN2 subfamily.

The catalysed reaction is L-seryl-[protein] + ATP = O-phospho-L-seryl-[protein] + ADP + H(+). The enzyme catalyses L-threonyl-[protein] + ATP = O-phospho-L-threonyl-[protein] + ADP + H(+). Functionally, serine/threonine-protein kinase which phosphorylates the alpha subunit of eukaryotic translation-initiation factor 2 (eIF2alpha), leading to its inactivation and thus to a rapid reduction of translational initiation and repression of global protein synthesis. Involved in the unfolded protein response (UPR) triggered by several stresses including mitochondrial, osmotic and oxidative stresses, amino acid deprivation and UV irradiation, probably by phosphorylating and inhibiting eIF2alpha. In addition, leads to the selective translation/transcription of some mRNA including atf-5, pha-4 and gpdh-1 which are part of the UPR. Required for maintaining lifespan during amino acid starvation. Involved in hypoxia-mediated adaptive protective response. In Caenorhabditis elegans, this protein is Eukaryotic translation initiation factor 2-alpha kinase gcn-2.